Consider the following 132-residue polypeptide: Fluoride-specific ion channel FluC (132 aa).

The next 4 helical transmembrane spans lie at 5–25 (LYIA…SGLV), 32–52 (TFPW…GFFA), 70–90 (FVMT…LQTL), and 105–125 (VVGS…AAVG). Na(+)-binding residues include Gly77 and Thr80.

This sequence belongs to the fluoride channel Fluc/FEX (TC 1.A.43) family.

The protein localises to the cell inner membrane. It catalyses the reaction fluoride(in) = fluoride(out). Its activity is regulated as follows. Na(+) is not transported, but it plays an essential structural role and its presence is essential for fluoride channel function. Functionally, fluoride-specific ion channel. Important for reducing fluoride concentration in the cell, thus reducing its toxicity. The chain is Fluoride-specific ion channel FluC from Opitutus terrae (strain DSM 11246 / JCM 15787 / PB90-1).